We begin with the raw amino-acid sequence, 351 residues long: Prohormone-2 (351 aa).

Residues 1–21 (MMCDWVWLLLTLCSLLMIVQS) form the signal peptide. 2 consecutive propeptides follow at residues 22-177 (LPTN…QTQV) and 192-319 (ELDI…MISR). Residues 51–69 (GNQQNHQPENNPSSSYSST) are compositionally biased toward polar residues. Disordered regions lie at residues 51–71 (GNQQNHQPENNPSSSYSSTAE) and 136–176 (NEDR…VQTQ). Positions 136 to 145 (NEDRRKRSEK) are enriched in basic and acidic residues. Positions 158–176 (PSTTSFQSPTSTQQSVQTQ) are enriched in low complexity.

The protein localises to the secreted. The chain is Prohormone-2 from Apis mellifera (Honeybee).